We begin with the raw amino-acid sequence, 30 residues long: Snaclec carinactivase-1 regulatory subunit 17 kDa chain (30 aa).

Residues 1–30 (DCLPGWSSHEGHCYKVFNQEMYWADAEKFC) form the C-type lectin domain. Cys2 and Cys13 form a disulfide bridge.

The protein belongs to the snaclec family. In terms of assembly, heterodimer of a metalloproteinase subunit and a regulatory subunit comprising two polypeptides disulfide-linked (14 kDa and 17 kDa chains). As to expression, expressed by the venom gland.

It localises to the secreted. In terms of biological role, calcium-dependent prothrombin activator. This protein may activate prothrombin via recognition by the regulatory subunit of the calcium ion bound conformation of its gamma-carboxyglutamic acid (GLA) domain, and the subsequent conversion of prothrombin to active thrombin is catalyzed by the catalytic subunit. The polypeptide is Snaclec carinactivase-1 regulatory subunit 17 kDa chain (Echis carinatus (Saw-scaled viper)).